The chain runs to 228 residues: 5'(3')-deoxyribonucleotidase, mitochondrial (228 aa).

A mitochondrion-targeting transit peptide spans 1 to 31 (MIRLGGWCARRLCSAAVPAGRRGAAGGLGLA). Aspartate 41 functions as the Nucleophile in the catalytic mechanism. Mg(2+) contacts are provided by aspartate 41 and aspartate 43. The active-site Proton donor is the aspartate 43. Aspartate 43, phenylalanine 49, phenylalanine 75, tryptophan 76, valine 77, tryptophan 96, threonine 130, and lysine 165 together coordinate substrate. Aspartate 176 is a Mg(2+) binding site.

The protein belongs to the 5'(3')-deoxyribonucleotidase family. Homodimer. Mg(2+) is required as a cofactor. As to expression, highly expressed in heart, brain and skeletal muscle. Detected at very low levels in kidney and pancreas.

Its subcellular location is the mitochondrion. Its function is as follows. Dephosphorylates specifically the 5' and 2'(3')-phosphates of uracil and thymine deoxyribonucleotides, and so protects mitochondrial DNA replication from excess dTTP. Has only marginal activity towards dIMP and dGMP. This chain is 5'(3')-deoxyribonucleotidase, mitochondrial (NT5M), found in Homo sapiens (Human).